The sequence spans 348 residues: MIGKRKEEHIRIAENEDVSSFHNFWDDISLMHEADPEVNYDEIDTSVDFLGKKLKFPMIISSMTGGAEIAKNINRNLAVAAERFGIGMGVGSMRAAIVDRSIEDTYSVINESHVPLKIANIGAPQLVRQDKDAVSNRDIAYIYDLIKADFLAVHFNFLQEMVQPEGDRNSKGVIDRIKDLSGSFNIIAKETGSGFSRRTAERLIDAGVKAIEVSGVSGTTFAAVEYYRARKENNLEKMRIGETFWNWGIPSPASVYYCSDLAPVIGSGGLRNGLDLAKAIAMGATAGGFARSLLKDADTDPEMLMKNIELIQREFRVALFLTGNKNVYELKFTKKVIVDPLRSWLEAK.

Substrate is bound at residue 5–6 (RK). Residues serine 61, 62-64 (SMT), serine 92, and asparagine 120 each bind FMN. 92 to 94 (SMR) serves as a coordination point for substrate. Glutamine 159 is a substrate binding site. A Mg(2+)-binding site is contributed by glutamate 160. FMN is bound by residues lysine 189, serine 214, threonine 219, 269 to 271 (GLR), and 290 to 291 (AR).

Belongs to the IPP isomerase type 2 family. Homooctamer. Dimer of tetramers. FMN serves as cofactor. It depends on NADPH as a cofactor. Requires Mg(2+) as cofactor.

It localises to the cytoplasm. The catalysed reaction is isopentenyl diphosphate = dimethylallyl diphosphate. Involved in the biosynthesis of isoprenoids. Catalyzes the 1,3-allylic rearrangement of the homoallylic substrate isopentenyl (IPP) to its allylic isomer, dimethylallyl diphosphate (DMAPP). The chain is Isopentenyl-diphosphate delta-isomerase from Thermoplasma acidophilum (strain ATCC 25905 / DSM 1728 / JCM 9062 / NBRC 15155 / AMRC-C165).